Consider the following 521-residue polypeptide: GMP synthase [glutamine-hydrolyzing] (521 aa).

The 193-residue stretch at 5–197 (KILILDFGSQ…VLDICGAQPG (193 aa)) folds into the Glutamine amidotransferase type-1 domain. The Nucleophile role is filled by C81. Active-site residues include H171 and E173. The region spanning 198–390 (WTMPNYIEEA…LGLPREMVYR (193 aa)) is the GMPS ATP-PPase domain. 225 to 231 (SGGVDSS) serves as a coordination point for ATP.

In terms of assembly, homodimer.

It catalyses the reaction XMP + L-glutamine + ATP + H2O = GMP + L-glutamate + AMP + diphosphate + 2 H(+). It participates in purine metabolism; GMP biosynthesis; GMP from XMP (L-Gln route): step 1/1. Its function is as follows. Catalyzes the synthesis of GMP from XMP. This Neisseria meningitidis serogroup C (strain 053442) protein is GMP synthase [glutamine-hydrolyzing].